Reading from the N-terminus, the 328-residue chain is MKTQTKVMGGHVLLTVFTLCMLCSGVRAQLSPDIYAKSCPNLVQIVRKQVAIALKAEIRMAASLIRLHFHDCFVNGCDASLLLDGADSEKLAIPNINSARGFEVIDTIKAAVENACPGVVSCADILTLAARDSVVLSGGPGWRVALGRKDGLVANQNSANNLPSPFEPLDAIIAKFVAVNLNITDVVALSGAHTFGQAKCAVFSNRLFNFTGLGNPDATLETSLLSNLQTVCPLGGNSNITAPLDRSTTDTFDNNYFKNLLEGKGLLSSDQILFSSDLAVNTTKKLVEAYSRSQSLFFRDFTCAMIRMGNISNGASGEVRTNCRVINN.

The signal sequence occupies residues 1-28 (MKTQTKVMGGHVLLTVFTLCMLCSGVRA). A Pyrrolidone carboxylic acid modification is found at Q29. 4 disulfide bridges follow: C39–C116, C72–C77, C122–C323, and C200–C232. H70 serves as the catalytic Proton acceptor. The Ca(2+) site is built by D71, V74, G76, D78, and S80. P163 contacts substrate. Residue N182 is glycosylated (N-linked (GlcNAc...) asparagine). Position 193 (H193) interacts with heme b. T194 contacts Ca(2+). Residues N209 and N239 are each glycosylated (N-linked (GlcNAc...) asparagine). Residues D245, T248, T251, and D253 each contribute to the Ca(2+) site. Residues N281 and N310 are each glycosylated (N-linked (GlcNAc...) asparagine).

Belongs to the peroxidase family. Classical plant (class III) peroxidase subfamily. It depends on heme b as a cofactor. Ca(2+) is required as a cofactor. In terms of tissue distribution, slightly expressed in roots.

It is found in the secreted. It carries out the reaction 2 a phenolic donor + H2O2 = 2 a phenolic radical donor + 2 H2O. Removal of H(2)O(2), oxidation of toxic reductants, biosynthesis and degradation of lignin, suberization, auxin catabolism, response to environmental stresses such as wounding, pathogen attack and oxidative stress. These functions might be dependent on each isozyme/isoform in each plant tissue. The sequence is that of Peroxidase 59 (PER59) from Arabidopsis thaliana (Mouse-ear cress).